A 432-amino-acid polypeptide reads, in one-letter code: Cyclic GMP-AMP synthase (432 aa).

110-115 (QGSFQY) contributes to the GTP binding site. Mg(2+) contacts are provided by Asp129 and Asp131. Arg180 provides a ligand contact to ATP. Asp191 is a Mg(2+) binding site. Ser255 contacts ATP. The GTP site is built by Lys283, Ser297, and Asp344. A disordered region spans residues 413–432 (LNAPSKEPSSKPINKTMVSG). Positions 423 to 432 (KPINKTMVSG) are enriched in polar residues.

The protein belongs to the CD-NTase family. A01 subfamily. Mg(2+) is required as a cofactor.

The enzyme catalyses GTP + ATP = 3',3'-cGAMP + 2 diphosphate. Its function is as follows. Cyclic nucleotide synthase (second messenger synthase) of a CBASS antivirus system. CBASS (cyclic oligonucleotide-based antiphage signaling system) provides immunity against bacteriophage. The CD-NTase protein synthesizes cyclic nucleotides in response to infection; these serve as specific second messenger signals. The signals activate a diverse range of effectors, leading to bacterial cell death and thus abortive phage infection. A type II-C(GA) CBASS system. Functionally, catalyzes the synthesis of 3'3'-cyclic GMP-AMP (3'3'-cGAMP) from GTP and ATP, a second messenger in cell signal transduction. Is also able to produce c-di-AMP and c-di-GMP from ATP and GTP, respectively; however, 3'3'-cGAMP is the dominant molecule produced by DncV in vivo, contrary to the 2'3'-cGAMP produced by eukaryotes. By producing cGAMP, down-regulates csgD expression and expression of flagellum regulon genes, which leads to the down-regulation of rdar biofilm formation and flagellum-mediated swimming and swarming motility in a temperature-dependent manner. Controls the activity of cGAMP-activated phospholipase CapV, a patatin-like lipase that is a direct 3',3'-cGAMP receptor encoded in the dncV operon. The chain is Cyclic GMP-AMP synthase from Escherichia coli.